A 373-amino-acid polypeptide reads, in one-letter code: tRNA-specific 2-thiouridylase MnmA (373 aa).

Residues 12–19 (GMSGGVDS) and methionine 38 contribute to the ATP site. The tract at residues 98 to 100 (NPD) is interaction with target base in tRNA. Cysteine 103 functions as the Nucleophile in the catalytic mechanism. A disulfide bond links cysteine 103 and cysteine 200. An ATP-binding site is contributed by glycine 127. The segment at 150-152 (KDQ) is interaction with tRNA. Cysteine 200 (cysteine persulfide intermediate) is an active-site residue. Residues 312-313 (RY) are interaction with tRNA.

It belongs to the MnmA/TRMU family.

The protein localises to the cytoplasm. It catalyses the reaction S-sulfanyl-L-cysteinyl-[protein] + uridine(34) in tRNA + AH2 + ATP = 2-thiouridine(34) in tRNA + L-cysteinyl-[protein] + A + AMP + diphosphate + H(+). Its function is as follows. Catalyzes the 2-thiolation of uridine at the wobble position (U34) of tRNA, leading to the formation of s(2)U34. This Streptococcus pyogenes serotype M49 (strain NZ131) protein is tRNA-specific 2-thiouridylase MnmA.